Reading from the N-terminus, the 724-residue chain is Disks large homolog 4 (724 aa).

S-palmitoyl cysteine attachment occurs at residues cysteine 3 and cysteine 5. The disordered stretch occupies residues 15 to 35 (QDEDTPPLEHSPAHLPNQANS). 2 PDZ domains span residues 65 to 151 (EITL…VMRR) and 160 to 246 (EIKL…VAKP). A phosphoserine mark is found at serine 73 and serine 142. Tyrosine 240 carries the phosphotyrosine modification. Residue serine 295 is modified to Phosphoserine. A PDZ 3 domain is found at 313 to 393 (RIVIHRGSTG…QTVTIIAQYK (81 aa)). A phosphoserine mark is found at serine 415 and serine 418. Threonine 420 carries the phosphothreonine modification. A phosphoserine mark is found at serine 422, serine 425, serine 449, and serine 480. Residues 428-498 (KRGFYIRALF…PSKRRVERRE (71 aa)) form the SH3 domain. Residues 534-709 (ARPIIILGPT…IYHKVKRVIE (176 aa)) enclose the Guanylate kinase-like domain. Tyrosine 580 carries the post-translational modification Phosphotyrosine. Phosphoserine occurs at positions 606 and 654. Phosphotyrosine is present on tyrosine 715.

Belongs to the MAGUK family. In terms of assembly, interacts through its PDZ domains with ANO2 and NETO1. Interacts with KCNJ4. Interacts through its first two PDZ domains with GRIN2A, GRIN2B, GRIN2C and GRIN2D. Interacts with ERBB4. Interacts with KCNA1, KCNA2, KCNA3 and KCNA4. Interacts with LRRC4 and LRRC4B. Interacts with SYNGAP1. Interacts with ASIC3. Interacts with SEMA4C. Interacts with CXADR. Interacts with KCND2. Interacts (via first PDZ domain) with CRIPT. Interacts through its first PDZ domain with GRIK2 and KCNA4. Interacts through its second PDZ domain with the PDZ domain of NOS1 or the C-terminus of CAPON. Interacts through its third PDZ domain with NLGN1 and CRIPT, and probably with NLGN2 and NLGN3. Interacts through its guanylate kinase-like domain with DLGAP1/GKAP, DLGAP2, DLGAP3, DLGAP4, MAP1A, BEGAIN and SIPA1L1. Interacts through its guanylate kinase-like domain with KIF13B. Isoform 2 interacts through an L27 domain with HGS/HRS and the first L27 domain of CASK. Interacts with ANKS1B. Interacts with ADR1B. May interact with HTR2A. Interacts with ADAM22, KLHL17 and LGI1. Interacts with FRMPD4 (via C-terminus). Interacts with LRFN1 and LRFN2. Interacts with LRFN4. Interacts (via N-terminal tandem pair of PDZ domains) with GPER1 (via C-terminus tail motif); the interaction is direct and induces the increase of GPER1 protein levels residing at the plasma membrane surface in a estradiol-independent manner. Interacts (via N-terminus tandem pair of PDZ domains) with NOS1 (via N-terminal domain). Interacts with SHANK3. Interacts with GPR85. Interacts with CACNG2 and MPP2 (via the SH3-Guanylate kinase-like sub-module). Interacts with ADGRB1. Found in a complex with PRR7 and GRIN1. Interacts (via PDZ3 domain and to lesser degree via PDZ2 domain) with PRR7. Component of the postsynaptic hippocampal AMPA-type glutamate receptor (AMPAR) complex, at least composed of pore forming AMPAR subunits GRIA1, GRIA2 and GRIA3 and AMPAR auxiliary proteins SHISA6 and SHISA7. Interacts (via its first two PDZ domains) with SHISA6 and SHISA7 (via PDZ-binding motif); the interaction is direct. Interacts (via PDZ domain 2) with SEMA4F (via PDZ-binding motif); this interaction may promote translocation of DLG4/SAP90 to the membrane. Interacts with RPH3A and GRIN2A; this ternary complex regulates NMDA receptor composition at postsynaptic membranes. Interacts with ABR and BCR. Interacts with DGKI (via PDZ-binding motif); controls the localization of DGKI to the synapse. Interacts with C9orf72, SMCR8 and RAB39B. Interacts with ZDHHC5. Interacts with PTEN (via PDZ domain-binding motif); the interaction is induced by NMDA and is required for PTEN location at postsynaptic density. Found in a complex with GRIA1, GRIA2, GRIA3, GRIA4, CACNG8 and CNIH2. Interacts with FAM81A; the interaction facilitates condensate formation via liquid-liquid phase separation. Interacts with ADGRL3. Interacts with SORCS3. Post-translationally, palmitoylated. Palmitoylation is required for targeting to postsynaptic density, plasma membrane and synapses. Palmitoylation by ZDHHC2 occurs when the synaptic activity decreases and induces DLG4 synaptic clustering. Palmitoylation by ZDHHC15 regulates trafficking to the postsynaptic density and function in synaptogenesis. Palmitoylation may play a role in glutamate receptor GRIA1 synapse clustering. Depalmitoylated by ABHD17A and ABHD17B and to a lesser extent by ABHD17C, ABHD12, ABHD13, LYPLA1 and LYPLA2. Undergoes rapid synaptic palmitoylation/depalmitoylation cycle during neuronal development which slows down in mature neurons. Ubiquitinated by MDM2 in response to NMDA receptor activation, leading to proteasome-mediated degradation of DLG4 which is required for AMPA receptor endocytosis. In terms of tissue distribution, expressed in brain (at protein level). Detected in juxtaparanodal zones in the central nervous system and at nerve terminal plexuses of basket cells in the cerebellum. Expressed in cerebrum. Expressed in hippocampal neurons (at protein level). Isoform 1 and isoform 2: highly expressed in cerebellum, cortex, hippocampus, and corpus striatum.

Its subcellular location is the cell membrane. It localises to the postsynaptic density. It is found in the synapse. The protein resides in the cytoplasm. The protein localises to the cell projection. Its subcellular location is the axon. It localises to the dendritic spine. It is found in the dendrite. The protein resides in the presynapse. Its function is as follows. Postsynaptic scaffolding protein that plays a critical role in synaptogenesis and synaptic plasticity by providing a platform for the postsynaptic clustering of crucial synaptic proteins. Interacts with the cytoplasmic tail of NMDA receptor subunits and shaker-type potassium channels. Required for synaptic plasticity associated with NMDA receptor signaling. Overexpression or depletion of DLG4 changes the ratio of excitatory to inhibitory synapses in hippocampal neurons. May reduce the amplitude of ASIC3 acid-evoked currents by retaining the channel intracellularly. May regulate the intracellular trafficking of ADR1B. Also regulates AMPA-type glutamate receptor (AMPAR) immobilization at postsynaptic density keeping the channels in an activated state in the presence of glutamate and preventing synaptic depression. Under basal conditions, cooperates with FYN to stabilize palmitoyltransferase ZDHHC5 at the synaptic membrane through FYN-mediated phosphorylation of ZDHHC5 and its subsequent inhibition of association with endocytic proteins. This Rattus norvegicus (Rat) protein is Disks large homolog 4.